Consider the following 82-residue polypeptide: Protein WFDC11 (82 aa).

Residues methionine 1 to glycine 21 form the signal peptide.

Its subcellular location is the secreted. In Mus musculus (Mouse), this protein is Protein WFDC11 (Wfdc11).